The primary structure comprises 44 residues: uncharacterized protein (44 aa).

A helical transmembrane segment spans residues 19 to 39 (AVGFVVSFGFFAFLFVMATVI).

It is found in the cell membrane. This is an uncharacterized protein from Bacillus subtilis (strain 168).